Here is a 121-residue protein sequence, read N- to C-terminus: Large ribosomal subunit protein bL12 (121 aa).

Belongs to the bacterial ribosomal protein bL12 family. Homodimer. Part of the ribosomal stalk of the 50S ribosomal subunit. Forms a multimeric L10(L12)X complex, where L10 forms an elongated spine to which 2 to 4 L12 dimers bind in a sequential fashion. Binds GTP-bound translation factors.

Forms part of the ribosomal stalk which helps the ribosome interact with GTP-bound translation factors. Is thus essential for accurate translation. The protein is Large ribosomal subunit protein bL12 of Aeromonas hydrophila subsp. hydrophila (strain ATCC 7966 / DSM 30187 / BCRC 13018 / CCUG 14551 / JCM 1027 / KCTC 2358 / NCIMB 9240 / NCTC 8049).